We begin with the raw amino-acid sequence, 244 residues long: Adenosylcobinamide-GDP ribazoletransferase (244 aa).

Transmembrane regions (helical) follow at residues 31-51 (LLCYPLVGLLFGLLLWLASHL), 55-75 (APAPLHAALLLTLWVLLSGAL), 109-129 (IAVVTLVLVLLLKFCALWVLV), 133-153 (AGALLVLAPVVGRAAMLGLFL), and 188-208 (LLLGGWSAIWPMALALGVFLW).

It belongs to the CobS family. It depends on Mg(2+) as a cofactor.

The protein resides in the cell inner membrane. It carries out the reaction alpha-ribazole + adenosylcob(III)inamide-GDP = adenosylcob(III)alamin + GMP + H(+). The enzyme catalyses alpha-ribazole 5'-phosphate + adenosylcob(III)inamide-GDP = adenosylcob(III)alamin 5'-phosphate + GMP + H(+). Its pathway is cofactor biosynthesis; adenosylcobalamin biosynthesis; adenosylcobalamin from cob(II)yrinate a,c-diamide: step 7/7. Joins adenosylcobinamide-GDP and alpha-ribazole to generate adenosylcobalamin (Ado-cobalamin). Also synthesizes adenosylcobalamin 5'-phosphate from adenosylcobinamide-GDP and alpha-ribazole 5'-phosphate. The sequence is that of Adenosylcobinamide-GDP ribazoletransferase from Pseudomonas putida (strain W619).